The primary structure comprises 568 residues: Autophagy-related protein 18 (568 aa).

A WD 1 repeat occupies 19–57 (KPSSSVNFITFNQDGSCIAVGNNKGYSIFTTNPFTKCYD). Positions 162–171 (STDTSNSADN) are enriched in polar residues. Positions 162 to 210 (STDTSNSADNSGSIGSGPASGSGAGSGSASMTSTDSTPDAQSHSYLAYP) are disordered. The span at 175-187 (IGSGPASGSGAGS) shows a compositional bias: gly residues. The segment covering 188–198 (GSASMTSTDST) has biased composition (low complexity). WD repeat units follow at residues 268–308 (AHKS…KLYQ) and 313–352 (TYPTKVYSVAFSPDNRYVVTTSASGTVHIFRLGEDESLES). The short motif at 309-313 (FRRGT) is the L/FRRG motif element. The tract at residues 350 to 429 (LESKHKRKRA…ISGMSEDGKE (80 aa)) is disordered. A compositionally biased stretch (acidic residues) spans 375–394 (DLDDEIEDDGDDSDVDDVES). The span at 405–421 (LSQGSSNSYTSMNSGIS) shows a compositional bias: polar residues. 2 WD repeats span residues 464–508 (DFLP…DMVP) and 518–558 (APAS…GGDC).

It belongs to the WD repeat PROPPIN family. As to quaternary structure, component of the PI(3,5)P2 regulatory complex.

The protein resides in the preautophagosomal structure membrane. It is found in the vacuole membrane. It localises to the endosome membrane. Functionally, the PI(3,5)P2 regulatory complex regulates both the synthesis and turnover of phosphatidylinositol 3,5-bisphosphate (PtdIns(3,5)P2). Necessary for proper vacuole morphology. Plays an important role in osmotically-induced vacuole fragmentation. Required for cytoplasm to vacuole transport (Cvt) vesicle formation, pexophagy and starvation-induced autophagy. Involved in correct ATG9 trafficking to the pre-autophagosomal structure. Might also be involved in premeiotic DNA replication. The protein is Autophagy-related protein 18 (ATG18) of Meyerozyma guilliermondii (strain ATCC 6260 / CBS 566 / DSM 6381 / JCM 1539 / NBRC 10279 / NRRL Y-324) (Yeast).